The following is a 148-amino-acid chain: uncharacterized protein (148 aa).

The [4Fe-4S] cluster site is built by cysteine 21, cysteine 24, cysteine 88, and cysteine 117.

It belongs to the complex I 20 kDa subunit family. [4Fe-4S] cluster serves as cofactor.

This is an uncharacterized protein from Methanocaldococcus jannaschii (strain ATCC 43067 / DSM 2661 / JAL-1 / JCM 10045 / NBRC 100440) (Methanococcus jannaschii).